The primary structure comprises 97 residues: Biogenesis of lysosome-related organelles complex 1 subunit SNN1 (97 aa).

Residues 45–97 (VVRLKQIRNLLKEEQEYYNEEEGLGVERERLEELELRVEKLTQKYKKLLADCV) adopt a coiled-coil conformation.

Belongs to the SNAPIN family. Component of the biogenesis of lysosome-related organelles complex-1 (BLOC-1).

The protein localises to the endosome. In terms of biological role, component of the biogenesis of lysosome-related organelles complex-1 (BLOC-1), a complex involved in endosomal cargo sorting. The polypeptide is Biogenesis of lysosome-related organelles complex 1 subunit SNN1 (SNN1) (Lachancea thermotolerans (strain ATCC 56472 / CBS 6340 / NRRL Y-8284) (Yeast)).